A 426-amino-acid chain; its full sequence is MALDILAMAPLYQAPAITRIGPKTDPSKRPADPLKPLVPSRTKLTTIEAKRIMSILDEAINKVELVTLLSYVASNREDVEGVLGEDIMRAVREHEEEAEEEGWLRDRLLSIELQKSSLSPLTQQIKDSTKNVLRLLLSNPQAARLLQMQTQSRSAEAQNFIDSLIELRGFLFEKLVTSPMEARDKAQFIQDINRQNSNNQQIIDTLENELAERMKKRNAEVEKENFVIQELKNHLHQVLKFSENSLLRTKQEAEKQQKADFRASQARVAKIQQEILQLQSQFYNLVMENREAEQALRKKKYKVETEIENWIQKYDTEMGEKQEELEDLEAVHKEEKIALEELKRRHKVLVEEFVQIREEREINSKKRMEAEQEMVRMVRAATLIQAFWKGYLVRSLLRSKKKRGKGKAKGKEKGKQKGKEKGKGKK.

2 disordered regions span residues 18 to 37 (TRIG…LKPL) and 399 to 426 (SKKK…KGKK). Positions 377–406 (MVRAATLIQAFWKGYLVRSLLRSKKKRGKG) constitute an IQ domain. A compositionally biased stretch (basic residues) spans 399-408 (SKKKRGKGKA). Residues 409-426 (KGKEKGKQKGKEKGKGKK) are compositionally biased toward basic and acidic residues.

It belongs to the DRC10 family. In terms of assembly, component of the nexin-dynein regulatory complex (N-DRC). Interacts with CFAP52.

Its subcellular location is the cytoplasm. It localises to the cytoskeleton. The protein localises to the flagellum axoneme. In terms of biological role, component of the nexin-dynein regulatory complex (N-DRC), a key regulator of ciliary/flagellar motility which maintains the alignment and integrity of the distal axoneme and regulates microtubule sliding in motile axonemes. The polypeptide is Dynein regulatory complex protein 10 (IQCD) (Macaca fascicularis (Crab-eating macaque)).